The primary structure comprises 237 residues: Ras-related protein Rab-23 (237 aa).

GTP contacts are provided by Val-20, Gly-21, Lys-22, Ser-23, Ser-24, Tyr-38, and Thr-41. Ser-23 is a binding site for Mg(2+). The Switch 1 motif lies at 28–46; sequence RYCKGIFTKDYKKTIGVDF. The Mg(2+) site is built by Thr-41 and Asp-64. The short motif at 65-84 is the Switch 2 element; that stretch reads TAGQEEFDAITKAYYRGAQA. Residues Gly-67, Asn-121, Lys-122, Asp-124, Ser-151, Val-152, and Lys-153 each contribute to the GTP site. 2 positions are modified to phosphoserine: Ser-186 and Ser-187. Residues 188-208 are compositionally biased toward polar residues; sequence SNKIGVFNTSGGSHSGQNSGT. Residues 188–237 are disordered; the sequence is SNKIGVFNTSGGSHSGQNSGTLNGGDVINLRPNKQRTKKNRNPFSSCSIP. Cys-234 is modified (cysteine methyl ester). A lipid anchor (S-geranylgeranyl cysteine) is attached at Cys-234. Positions 235–237 are cleaved as a propeptide — removed in mature form; sequence SIP.

This sequence belongs to the small GTPase superfamily. Rab family. In terms of assembly, interacts with SUFU. Mg(2+) serves as cofactor.

The protein localises to the cell membrane. It is found in the cytoplasm. It localises to the cytoplasmic vesicle. The protein resides in the autophagosome. Its subcellular location is the endosome membrane. The protein localises to the phagosome. It is found in the phagosome membrane. It carries out the reaction GTP + H2O = GDP + phosphate + H(+). With respect to regulation, regulated by guanine nucleotide exchange factors (GEFs) which promote the exchange of bound GDP for free GTP. Regulated by GTPase activating proteins (GAPs) which increase the GTP hydrolysis activity. Inhibited by GDP dissociation inhibitors (GDIs). The small GTPases Rab are key regulators of intracellular membrane trafficking, from the formation of transport vesicles to their fusion with membranes. Rabs cycle between an inactive GDP-bound form and an active GTP-bound form that is able to recruit to membranes different set of downstream effectors directly responsible for vesicle formation, movement, tethering and fusion. Together with SUFU, prevents nuclear import of GLI1, and thereby inhibits GLI1 transcription factor activity. Regulates GLI1 in differentiating chondrocytes. Likewise, regulates GLI3 proteolytic processing and modulates GLI2 and GLI3 transcription factor activity. Plays a role in autophagic vacuole assembly, and mediates defense against pathogens, such as S.aureus, by promoting their capture by autophagosomes that then merge with lysosomes. This is Ras-related protein Rab-23 from Homo sapiens (Human).